Here is a 57-residue protein sequence, read N- to C-terminus: U17-myrmicitoxin-Tb1a (57 aa).

Positions 1-29 (MEKNRTNIFSVYLMITFLLISIFITMVMS) are cleaved as a signal peptide. The propeptide occupies 30-33 (DGEA). A disulfide bridge connects residues Cys42 and Cys53. An Alanine amide modification is found at Ala56.

O-glycosylated. In terms of tissue distribution, expressed by the venom gland.

Its subcellular location is the secreted. Functionally, serine protease inhibitor which exhibits antifibrinolytic, antielastolytic and antimicrobial activities. Displays antimicrobial activity against bacteria and fungi. Likely functions in the innate immune response to microbial infection and possibly in the venom, as an antifibrinolytic agent. The protein is U17-myrmicitoxin-Tb1a of Tetramorium bicarinatum (Tramp ant).